We begin with the raw amino-acid sequence, 633 residues long: MPDVKKFEAGTYDVIVVGAGHAGCEAALAAARMGQKTLLLTISLEMLAFMPCNPSLGGPAKGIVVREIDALGGEMGKNIDRTYIQMRMLNTGKGPAVRALRAQADKAAYHRSMKHVIENTPNLDLRQGLATEVLVENGQAVGIVAATGAMYRAKSVVLTAGTSSRGKIIIGELMYSSGPNNSLPSIKLSENLEQLGFKLRRFKTGTPPRVNGNTIDFDKTEEQPGDKTPNHFSFTTPDSVYLKDQLSCWMTYTNATTHQIIRDNLDRAPMFSGVIKGVGPRYCPSIEDKIVRFADKPRHQLFLEPEGRDTSEYYVGDFSTSMPEEIQLKMLHSVAGLEHAELMRAGYAIEYDVIEPWQLKATLETKVVDNLFTAGQMNGTSGYEEAAGQGIMAGINAALRAQGKGPFTLKRSDAYIGVMIDDLVTKGTNEPYRLLTSRAEYRLLLRHDNADLRLKPMGHELGLISDERYAEFLAKRQAIETELNRLNTTRLKPKDVNPWLEAHHYAPLKDGVLASDFLKRPEIDYQTMAQFLPDNPTLDHRVIEQVEIQIKYAGYIAKEEASVAKLKRLEGKKIPLRINYAAINGLATEARQKLVKIQPETIAQASRISGVNPADVAILSVYIEQGRISKVAQ.

Position 18–23 (18–23) interacts with FAD; that stretch reads GAGHAG. The tract at residues 208–232 is disordered; that stretch reads PRVNGNTIDFDKTEEQPGDKTPNHF. Over residues 216-229 the composition is skewed to basic and acidic residues; sequence DFDKTEEQPGDKTP. 279 to 293 contributes to the NAD(+) binding site; the sequence is GPRYCPSIEDKIVRF.

It belongs to the MnmG family. In terms of assembly, homodimer. Heterotetramer of two MnmE and two MnmG subunits. FAD serves as cofactor.

The protein localises to the cytoplasm. Functionally, NAD-binding protein involved in the addition of a carboxymethylaminomethyl (cmnm) group at the wobble position (U34) of certain tRNAs, forming tRNA-cmnm(5)s(2)U34. The protein is tRNA uridine 5-carboxymethylaminomethyl modification enzyme MnmG of Lacticaseibacillus paracasei (strain ATCC 334 / BCRC 17002 / CCUG 31169 / CIP 107868 / KCTC 3260 / NRRL B-441) (Lactobacillus paracasei).